The chain runs to 281 residues: NADPH-dependent 7-cyano-7-deazaguanine reductase (281 aa).

87–89 (VES) provides a ligand contact to substrate. An NADPH-binding site is contributed by 89–90 (SK). Residue C188 is the Thioimide intermediate of the active site. D195 acts as the Proton donor in catalysis. 227 to 228 (HE) lines the substrate pocket. 256–257 (RG) contacts NADPH.

The protein belongs to the GTP cyclohydrolase I family. QueF type 2 subfamily. As to quaternary structure, homodimer.

It is found in the cytoplasm. The catalysed reaction is 7-aminomethyl-7-carbaguanine + 2 NADP(+) = 7-cyano-7-deazaguanine + 2 NADPH + 3 H(+). The protein operates within tRNA modification; tRNA-queuosine biosynthesis. Functionally, catalyzes the NADPH-dependent reduction of 7-cyano-7-deazaguanine (preQ0) to 7-aminomethyl-7-deazaguanine (preQ1). In Aliivibrio fischeri (strain MJ11) (Vibrio fischeri), this protein is NADPH-dependent 7-cyano-7-deazaguanine reductase.